We begin with the raw amino-acid sequence, 723 residues long: Catalase-peroxidase (723 aa).

Residues 98–226 (WHSAGSYRVG…LAAVMMGLIY (129 aa)) constitute a cross-link (tryptophyl-tyrosyl-methioninium (Trp-Tyr) (with M-252)). Residue His-99 is the Proton acceptor of the active site. Residues 226 to 252 (YVNPEGVDGNPDPLKTAKDMRVTFARM) constitute a cross-link (tryptophyl-tyrosyl-methioninium (Tyr-Met) (with W-98)). His-267 is a heme b binding site.

It belongs to the peroxidase family. Peroxidase/catalase subfamily. Homodimer or homotetramer. The cofactor is heme b. Post-translationally, formation of the three residue Trp-Tyr-Met cross-link is important for the catalase, but not the peroxidase activity of the enzyme.

The enzyme catalyses H2O2 + AH2 = A + 2 H2O. It carries out the reaction 2 H2O2 = O2 + 2 H2O. Functionally, bifunctional enzyme with both catalase and broad-spectrum peroxidase activity. The protein is Catalase-peroxidase of Vibrio vulnificus (strain CMCP6).